We begin with the raw amino-acid sequence, 387 residues long: MTVLKMTDLDLQGKRVLIREDLNVPVKDGVVTSDARILASLPTIKLALEKGAAVMVCSHLGRPTEGEFSAENSLKPVADYLSRALGREVPLVADYLGGVEVKAGDIVLFENVRFNKGEKKNADELAQQYAALCDVFVMDAFGTAHRAEGSTHGVAKFAKVAAAGPLLAAELDALGKALGNPAKPMAAIVAGSKVSTKLDVLNSLSQICDQLIVGGGIANTFLAAAGHPVGKSLYEPDLLDTARAIAAKVSVPLPVDVVVAKEFAESAAATVKLIADVADDDMILDIGPQTAAQFAELLKSSRTILWNGPVGVFEFDQFGNGTKVLAQAIADSAAFSIAGGGDTLAAIDKYGVAQQISYISTGGGAFLEFVEGKVLPAVEVLEARAKA.

Residues 21–23, Arg36, 59–62, Arg113, and Arg146 each bind substrate; these read DLN and HLGR. ATP is bound by residues Lys197, Glu314, and 340–343; that span reads GGDT.

Belongs to the phosphoglycerate kinase family. In terms of assembly, monomer.

The protein resides in the cytoplasm. The catalysed reaction is (2R)-3-phosphoglycerate + ATP = (2R)-3-phospho-glyceroyl phosphate + ADP. The protein operates within carbohydrate degradation; glycolysis; pyruvate from D-glyceraldehyde 3-phosphate: step 2/5. This chain is Phosphoglycerate kinase, found in Pseudomonas fluorescens (strain ATCC BAA-477 / NRRL B-23932 / Pf-5).